The sequence spans 357 residues: S-adenosylmethionine:tRNA ribosyltransferase-isomerase (357 aa).

This sequence belongs to the QueA family. In terms of assembly, monomer.

The protein resides in the cytoplasm. The enzyme catalyses 7-aminomethyl-7-carbaguanosine(34) in tRNA + S-adenosyl-L-methionine = epoxyqueuosine(34) in tRNA + adenine + L-methionine + 2 H(+). The protein operates within tRNA modification; tRNA-queuosine biosynthesis. Its function is as follows. Transfers and isomerizes the ribose moiety from AdoMet to the 7-aminomethyl group of 7-deazaguanine (preQ1-tRNA) to give epoxyqueuosine (oQ-tRNA). This Buchnera aphidicola subsp. Acyrthosiphon pisum (strain Tuc7) protein is S-adenosylmethionine:tRNA ribosyltransferase-isomerase.